Consider the following 137-residue polypeptide: Nucleoside diphosphate kinase (137 aa).

ATP-binding residues include Lys9, Phe57, Arg85, Thr91, Arg102, and Asn112. His115 acts as the Pros-phosphohistidine intermediate in catalysis.

This sequence belongs to the NDK family. In terms of assembly, homotetramer. Mg(2+) serves as cofactor.

Its subcellular location is the cytoplasm. The enzyme catalyses a 2'-deoxyribonucleoside 5'-diphosphate + ATP = a 2'-deoxyribonucleoside 5'-triphosphate + ADP. It carries out the reaction a ribonucleoside 5'-diphosphate + ATP = a ribonucleoside 5'-triphosphate + ADP. In terms of biological role, major role in the synthesis of nucleoside triphosphates other than ATP. The ATP gamma phosphate is transferred to the NDP beta phosphate via a ping-pong mechanism, using a phosphorylated active-site intermediate. This is Nucleoside diphosphate kinase from Helicobacter hepaticus (strain ATCC 51449 / 3B1).